We begin with the raw amino-acid sequence, 196 residues long: Probable GTP-binding protein EngB (196 aa).

The EngB-type G domain maps to 24–196 (ELSEVALSGR…IWNLIEPYIS (173 aa)). GTP contacts are provided by residues 32 to 39 (GRSNVGKS), 59 to 63 (GKTQT), 77 to 80 (DVPG), 144 to 147 (TKED), and 176 to 178 (YSS). The Mg(2+) site is built by S39 and T61.

The protein belongs to the TRAFAC class TrmE-Era-EngA-EngB-Septin-like GTPase superfamily. EngB GTPase family. The cofactor is Mg(2+).

Its function is as follows. Necessary for normal cell division and for the maintenance of normal septation. The protein is Probable GTP-binding protein EngB of Staphylococcus aureus (strain MRSA252).